Here is a 259-residue protein sequence, read N- to C-terminus: Haloacid dehalogenase-like hydrolase domain-containing protein 2 (259 aa).

Positions 13 and 15 each coordinate Mg(2+). Substrate-binding positions include 13–15 and 46–47; these read DLS and TN. Residues 49 to 71 adopt a coiled-coil conformation; the sequence is TKESKRDLLERLRKLEFDISEEE. Lys-50 bears the N6-succinyllysine mark. Position 179 (Lys-179) interacts with substrate. Position 204 (Asp-204) interacts with Mg(2+).

It belongs to the HAD-like hydrolase superfamily. The cofactor is Mg(2+).

The sequence is that of Haloacid dehalogenase-like hydrolase domain-containing protein 2 (Hdhd2) from Rattus norvegicus (Rat).